The primary structure comprises 277 residues: Probable enoyl-CoA hydratase, mitochondrial (277 aa).

A mitochondrion-targeting transit peptide spans 1 to 42 (MLKQVIKTVSSSQAPKKYFFKQFCTSTTEKKGRVGLVTLNRP). Substrate is bound by residues 85 to 88 (ADIK) and G128.

This sequence belongs to the enoyl-CoA hydratase/isomerase family. Homohexamer; dimer of trimers.

Its subcellular location is the mitochondrion matrix. The enzyme catalyses a (3S)-3-hydroxyacyl-CoA = a (2E)-enoyl-CoA + H2O. The catalysed reaction is a 4-saturated-(3S)-3-hydroxyacyl-CoA = a (3E)-enoyl-CoA + H2O. It catalyses the reaction (3S)-3-hydroxybutanoyl-CoA = (2E)-butenoyl-CoA + H2O. It carries out the reaction 3-hydroxyisovaleryl-CoA = 3-methylbut-2-enoyl-CoA + H2O. The enzyme catalyses 3-hydroxypropanoyl-CoA = acryloyl-CoA + H2O. The catalysed reaction is 3-hydroxybutanoyl-CoA = (2E)-butenoyl-CoA + H2O. It functions in the pathway lipid metabolism; fatty acid beta-oxidation. Its function is as follows. Straight-chain enoyl-CoA thioesters from C4 up to at least C16 are processed, although with decreasing catalytic rate. This is Probable enoyl-CoA hydratase, mitochondrial (echs1) from Dictyostelium discoideum (Social amoeba).